A 210-amino-acid polypeptide reads, in one-letter code: ATP-dependent Clp protease proteolytic subunit (210 aa).

Residue Ser-107 is the Nucleophile of the active site. Residue His-132 is part of the active site.

It belongs to the peptidase S14 family. In terms of assembly, fourteen ClpP subunits assemble into 2 heptameric rings which stack back to back to give a disk-like structure with a central cavity, resembling the structure of eukaryotic proteasomes.

The protein resides in the cytoplasm. The enzyme catalyses Hydrolysis of proteins to small peptides in the presence of ATP and magnesium. alpha-casein is the usual test substrate. In the absence of ATP, only oligopeptides shorter than five residues are hydrolyzed (such as succinyl-Leu-Tyr-|-NHMec, and Leu-Tyr-Leu-|-Tyr-Trp, in which cleavage of the -Tyr-|-Leu- and -Tyr-|-Trp bonds also occurs).. In terms of biological role, cleaves peptides in various proteins in a process that requires ATP hydrolysis. Has a chymotrypsin-like activity. Plays a major role in the degradation of misfolded proteins. This Zymomonas mobilis subsp. mobilis (strain ATCC 31821 / ZM4 / CP4) protein is ATP-dependent Clp protease proteolytic subunit.